A 100-amino-acid polypeptide reads, in one-letter code: Small ribosomal subunit protein uS14c (100 aa).

Residues M1 to S54 form a disordered region.

This sequence belongs to the universal ribosomal protein uS14 family. In terms of assembly, part of the 30S ribosomal subunit.

The protein localises to the plastid. Its subcellular location is the chloroplast. In terms of biological role, binds 16S rRNA, required for the assembly of 30S particles. The polypeptide is Small ribosomal subunit protein uS14c (Piper cenocladum (Ant piper)).